The following is a 153-amino-acid chain: MAKSTVVEKVTEAVAPIVEEAKLELVDVEYVKEGGNWYLRIFIDKPGGIELDDCQGVSEKIDTLLDEIDPVPQAYFLEVSSPGIERPLKKPQDFEKFNGHLVNITTFAPINGSKNFIGKLLDYNEEGIHLEIKGKQVVLPHQQVATARLAVEI.

This sequence belongs to the RimP family.

Its subcellular location is the cytoplasm. Functionally, required for maturation of 30S ribosomal subunits. The protein is Ribosome maturation factor RimP of Desulforamulus reducens (strain ATCC BAA-1160 / DSM 100696 / MI-1) (Desulfotomaculum reducens).